The sequence spans 623 residues: Protein EDS1 (623 aa).

An N-acetylalanine modification is found at Ala-2. Ser-123 (nucleophile) is an active-site residue. Residues Asp-187 and His-317 each act as charge relay system in the active site. Residues Val-358–Arg-383 are a coiled coil.

As to quaternary structure, homodimer. Interacts with RPS4, RPS6, SNC1, SRFR1, AvrRps4 and HopA1. Part of a nuclear complex made of EDS1, PAD4 and SAG101, that can be redirected to the cytoplasm in the presence of an extranuclear form of EDS1. Interacts (via N-terminus) with PAD4 (via N-terminus). Interacts (via N-terminus) with SAG101. EDS1-SAG101 and EDS1-PAD4 form separate complexes in pathogen-unchallenged cells. Part of a nuclear protein complex made of VICTR, PAD4 and EDS1. Interacts with VICTR.

It is found in the nucleus. The protein resides in the cytoplasm. It localises to the microsome. Functionally, positive regulator of basal resistance and of effector-triggered immunity specifically mediated by TIR-NB-LRR (TNL) resistance proteins. Disruption by bacterial effector of EDS1-TIR-NB-LRR resistance protein interactions constitutes the first step in resistance activation. Acts redundantly with salicylic acid to regulate resistance gene-mediated signaling. Triggers early plant defenses and hypersensitive response independently of PAD4, and then recruits PAD4 to potentiate plant defenses through the accumulation of salicylic acid. Nuclear localization is essential for basal and TNL-conditioned immunity and for reprogramming defense gene expression, while cytoplasmic EDS1 is required to induce a complete immune response. Heterodimerization with PAD4 and/or SGA101 is necessary for TNL-mediated effector-triggered immunity. Contributes to nonhost resistance against E.amylovora. Loss of EDS1-PAD4 interaction compromises basal but not TNL-triggered resistance. Necessary for systemic acquired resistance (SAR) signal generation and perception. Has no direct lipase activity. Putative lipase activity is dispensable for immune functions. The chain is Protein EDS1 from Arabidopsis thaliana (Mouse-ear cress).